We begin with the raw amino-acid sequence, 1213 residues long: uncharacterized protein (1213 aa).

The region spanning 289 to 390 (ATKRQGWLLR…WGSVINNARE (102 aa)) is the PH domain. The VASt domain maps to 776–945 (LDDIVFDRVY…EVNFLEKATR (170 aa)). 2 helical membrane passes run 996–1016 (LFLQ…FHIF) and 1025–1045 (FLVI…FCFG).

The protein resides in the cytoplasm. It is found in the nucleus membrane. It localises to the cytoskeleton. Its subcellular location is the microtubule organizing center. The protein localises to the spindle pole body. This is an uncharacterized protein from Schizosaccharomyces pombe (strain 972 / ATCC 24843) (Fission yeast).